A 247-amino-acid polypeptide reads, in one-letter code: T-cell surface glycoprotein CD8 alpha chain (247 aa).

An N-terminal signal peptide occupies residues 1–27 (MASPLTRFLSLNLLLLGESIILGSGEA). One can recognise an Ig-like V-type domain in the interval 28–139 (KPQAPELRIF…SVISNSVMYF (112 aa)). The Extracellular portion of the chain corresponds to 28 to 196 (KPQAPELRIF…TGLDFACDIY (169 aa)). Cysteine 53 and cysteine 129 form a disulfide bridge. Asparagine 69, asparagine 97, and asparagine 150 each carry an N-linked (GlcNAc...) asparagine glycan. Residues 156-182 (PVLRTPSPVHPTGTSQPQRPEDCRPRG) form a disordered region. Residues 197–217 (IWAPLAGICVALLLSLIITLI) form a helical membrane-spanning segment. At 218–247 (CYHRSRKRVCKCPRPLVRQEGKPRPSEKIV) the chain is on the cytoplasmic side.

As to quaternary structure, forms disulfide-linked heterodimers with CD8B at the cell surface. Also forms homodimers in several cell types including NK-cells or peripheral blood T-lymphocytes. Interacts with the MHC class I HLA-A/B2M dimer. Interacts with LCK in a zinc-dependent manner. Palmitoylated, but association with CD8B seems to be more important for the enrichment of CdD8A in lipid rafts. Post-translationally, phosphorylated in cytotoxic T-lymphocytes (CTLs) following activation.

Its subcellular location is the cell membrane. Functionally, integral membrane glycoprotein that plays an essential role in the immune response and serves multiple functions in responses against both external and internal offenses. In T-cells, functions primarily as a coreceptor for MHC class I molecule:peptide complex. The antigens presented by class I peptides are derived from cytosolic proteins while class II derived from extracellular proteins. Interacts simultaneously with the T-cell receptor (TCR) and the MHC class I proteins presented by antigen presenting cells (APCs). In turn, recruits the Src kinase LCK to the vicinity of the TCR-CD3 complex. LCK then initiates different intracellular signaling pathways by phosphorylating various substrates ultimately leading to lymphokine production, motility, adhesion and activation of cytotoxic T-lymphocytes (CTLs). This mechanism enables CTLs to recognize and eliminate infected cells and tumor cells. In NK-cells, the presence of CD8A homodimers at the cell surface provides a survival mechanism allowing conjugation and lysis of multiple target cells. CD8A homodimer molecules also promote the survival and differentiation of activated lymphocytes into memory CD8 T-cells. The polypeptide is T-cell surface glycoprotein CD8 alpha chain (Cd8a) (Mus musculus (Mouse)).